A 308-amino-acid chain; its full sequence is Olfactory receptor 5H19 (308 aa).

The Extracellular segment spans residues 1-27 (MEKNATLLTEFVLTGLSHQPLWNIPLF). An N-linked (GlcNAc...) asparagine glycan is attached at asparagine 4. Residues 28-48 (LVFLVIYLITIVGNVSLITLI) traverse the membrane as a helical segment. Residues 49 to 55 (WTDPHLH) lie on the Cytoplasmic side of the membrane. A helical membrane pass occupies residues 56–76 (IPMYLFLGSLAFVDTSISSIV). At 77–92 (VPKMLLNFFGKSKVIT) the chain is on the extracellular side. Residues 93–113 (LSECMAQFFLFNISATTECFL) traverse the membrane as a helical segment. Residues cysteine 96 and cysteine 188 are joined by a disulfide bond. The Cytoplasmic segment spans residues 114-143 (LAAMAYDRYVAICKPLLYPVVMTNGLCVWL). Residues 144-164 (IALSFVAGIIHALIHEGFLLR) form a helical membrane-spanning segment. The Extracellular segment spans residues 165–197 (LTFCNSNMIHNFYCDIISLLKISCTDTSLNYLI). The helical transmembrane segment at 198–218 (VFIFSGSIQVFTISTILVSYT) threads the bilayer. At 219–238 (IILFTILKKKSAKGIKKAFS) the chain is on the cytoplasmic side. Residues 239-259 (TCGAHLLSVSLYYGPLLFMYV) traverse the membrane as a helical segment. Residues 260–270 (HPASSEVDDQD) are Extracellular-facing. A helical membrane pass occupies residues 271-291 (MIDSLFYTVIIPVLNPIIYSL). Over 292–308 (RNKQVIDSLAKFLKRNV) the chain is Cytoplasmic.

It belongs to the G-protein coupled receptor 1 family.

It is found in the cell membrane. Potential odorant receptor. The sequence is that of Olfactory receptor 5H19 from Mus musculus (Mouse).